Consider the following 265-residue polypeptide: Type 1 encapsulin shell protein (265 aa).

Residues 79 to 81 (RAT) and tryptophan 87 each bind FMN. The tract at residues 184–189 (EAGHYP) is pore-forming loop. Glutamate 235 serves as a coordination point for FMN.

This sequence belongs to the encapsulin family. Family 1 subfamily. As to quaternary structure, this encapsulin nanocompartment is formed by 60 subunits; monomers form pentamers which assemble to form shells. There are 12 pores where the pentamers meet as well as 3-fold axis channels and dimer channels; none are larger than 3-4 Angstroms in diameter. The N-terminus of the protein is inside the shell, the C-terminus is outside. The cofactor is FMN.

The protein resides in the encapsulin nanocompartment. Shell component of a type 1 encapsulin nanocompartment. Assembles into proteinaceous shells 23-24 nm in diameter with 2-2.5 nm thick walls. Cargo protein Flp (ferritin-like protein, may store iron) is targeted to the interior via its C-terminal extension. This Thermotoga petrophila (strain ATCC BAA-488 / DSM 13995 / JCM 10881 / RKU-1) protein is Type 1 encapsulin shell protein.